The following is a 118-amino-acid chain: Beta-2-microglobulin (118 aa).

Positions 1-20 (MAPLVALVLLGLLSLSGLDA) are cleaved as a signal peptide. The 88-residue stretch at 25 to 112 (PKVQVYSRHP…HVTLDKPKIV (88 aa)) folds into the Ig-like C1-type domain. Cys45 and Cys99 form a disulfide bridge.

It belongs to the beta-2-microglobulin family. Heterodimer of an alpha chain and a beta chain. Beta-2-microglobulin is the beta-chain of major histocompatibility complex class I molecules.

It is found in the secreted. Functionally, component of the class I major histocompatibility complex (MHC). Involved in the presentation of peptide antigens to the immune system. In Sus scrofa (Pig), this protein is Beta-2-microglobulin (B2M).